We begin with the raw amino-acid sequence, 481 residues long: Coniferyl aldehyde dehydrogenase (481 aa).

Active-site residues include glutamate 221 and cysteine 255.

This sequence belongs to the aldehyde dehydrogenase family. In terms of assembly, homodimer.

The catalysed reaction is (E)-coniferaldehyde + NADP(+) + H2O = (E)-ferulate + NADPH + 2 H(+). It catalyses the reaction (E)-coniferaldehyde + NAD(+) + H2O = (E)-ferulate + NADH + 2 H(+). In terms of biological role, catalyzes the NAD(+)-dependent oxidation of coniferyl aldehyde to ferulic acid and which is induced during growth with eugenol as the carbon source. The chain is Coniferyl aldehyde dehydrogenase (calB) from Pseudomonas sp. (strain HR199 / DSM 7063).